The chain runs to 41 residues: Photosystem I reaction center subunit IX (41 aa).

A helical transmembrane segment spans residues 7–27 (YLSTAPVLATLWFGFLAGLLI).

It belongs to the PsaJ family.

The protein localises to the plastid. The protein resides in the chloroplast thylakoid membrane. Functionally, may help in the organization of the PsaE and PsaF subunits. The protein is Photosystem I reaction center subunit IX of Physcomitrium patens (Spreading-leaved earth moss).